The chain runs to 364 residues: 2-oxoglutarate-dependent dioxygenase imqE (364 aa).

A disordered region spans residues 73–92 (KQKAAHPPGPNPQRGWSGIG). In terms of domain architecture, Fe2OG dioxygenase spans 199 to 315 (DGSELRLLHY…RWSAAYFFKA (117 aa)). Histidine 227, aspartate 229, and histidine 287 together coordinate Fe cation. Residue arginine 306 participates in 2-oxoglutarate binding.

This sequence belongs to the iron/ascorbate-dependent oxidoreductase family. It depends on Fe(2+) as a cofactor.

It participates in secondary metabolite biosynthesis. Its function is as follows. 2-oxoglutarate-dependent dioxygenase; part of the gene cluster that mediates the biosynthesis of imizoquins A to D, tripeptide-derived alkaloids that serve a protective role against oxidative stress that are essential for normal germination. ImqB is a canonical three-module NRPS that assembles the tripeptide backbone of the imizoquins via condensation of Trp, Tyr, and Leu-derived precursors. N-methylation by imqF and phenol oxidation by imqC, followed by cyclization via the FAD-dependent oxidase imqH carry out the three-step transformation of L-tyrosine into tetrahydroisoquinoline. Importantly, this sequence requires the presence of a free amine in the tyrosine moiety, indicating that isoquinoline formation occurs prior to peptide bond formation. The imidazolidin-4-one ring of imizoquins could form following additional oxidation of the methyl-derived bridgehead carbon by imqH. Lastly, O-methylation by imqG and leucine hydroxylation by imqE complete biosynthesis of the imizoquins. The polypeptide is 2-oxoglutarate-dependent dioxygenase imqE (Aspergillus flavus (strain ATCC 200026 / FGSC A1120 / IAM 13836 / NRRL 3357 / JCM 12722 / SRRC 167)).